Here is a 608-residue protein sequence, read N- to C-terminus: UvrABC system protein C (608 aa).

The GIY-YIG domain maps to 18–96; sequence NQPGVYRMYN…IKKYKPRYNV (79 aa). The UVR domain occupies 206 to 241; it reads KQVIDSLVQHMERASTDLRFEAAARYRDQISALNKV.

This sequence belongs to the UvrC family. In terms of assembly, interacts with UvrB in an incision complex.

The protein localises to the cytoplasm. Its function is as follows. The UvrABC repair system catalyzes the recognition and processing of DNA lesions. UvrC both incises the 5' and 3' sides of the lesion. The N-terminal half is responsible for the 3' incision and the C-terminal half is responsible for the 5' incision. The protein is UvrABC system protein C of Pseudoalteromonas atlantica (strain T6c / ATCC BAA-1087).